The chain runs to 729 residues: Isocitrate dehydrogenase [NADP] (729 aa).

2 residues coordinate NADP(+): asparagine 83 and serine 85. D-threo-isocitrate-binding residues include serine 121, asparagine 124, arginine 128, arginine 134, and lysine 244. An NADP(+)-binding site is contributed by asparagine 124. Aspartate 337 contributes to the Mg(2+) binding site. 2 residues coordinate D-threo-isocitrate: tyrosine 407 and arginine 534. The Mg(2+) site is built by aspartate 535 and aspartate 539. The NADP(+) site is built by serine 572, histidine 576, arginine 587, aspartate 589, and arginine 636.

This sequence belongs to the monomeric-type IDH family. As to quaternary structure, monomer. Mg(2+) serves as cofactor. Requires Mn(2+) as cofactor.

It catalyses the reaction D-threo-isocitrate + NADP(+) = 2-oxoglutarate + CO2 + NADPH. Its function is as follows. Catalyzes the oxidative decarboxylation of isocitrate to 2-oxoglutarate and carbon dioxide with the concomitant reduction of NADP(+). This chain is Isocitrate dehydrogenase [NADP], found in Corynebacterium efficiens (strain DSM 44549 / YS-314 / AJ 12310 / JCM 11189 / NBRC 100395).